The primary structure comprises 35 residues: Conotoxin Cal6.1d (35 aa).

Positions 1–8 are excised as a propeptide; it reads GLTRPSKR. 3 cysteine pairs are disulfide-bonded: Cys9-Cys25, Cys16-Cys29, and Cys24-Cys34.

This sequence belongs to the conotoxin O1 superfamily. As to expression, expressed by the venom duct.

It is found in the secreted. Functionally, probable neurotoxin with unknown target. Possibly targets ion channels. The sequence is that of Conotoxin Cal6.1d from Californiconus californicus (California cone).